Reading from the N-terminus, the 199-residue chain is 3-isopropylmalate dehydratase small subunit (199 aa).

It belongs to the LeuD family. LeuD type 1 subfamily. In terms of assembly, heterodimer of LeuC and LeuD.

The catalysed reaction is (2R,3S)-3-isopropylmalate = (2S)-2-isopropylmalate. It participates in amino-acid biosynthesis; L-leucine biosynthesis; L-leucine from 3-methyl-2-oxobutanoate: step 2/4. Its function is as follows. Catalyzes the isomerization between 2-isopropylmalate and 3-isopropylmalate, via the formation of 2-isopropylmaleate. This chain is 3-isopropylmalate dehydratase small subunit, found in Bacillus velezensis (strain DSM 23117 / BGSC 10A6 / LMG 26770 / FZB42) (Bacillus amyloliquefaciens subsp. plantarum).